The primary structure comprises 188 residues: Pyridoxal 5'-phosphate synthase subunit PdxT (188 aa).

47 to 49 serves as a coordination point for L-glutamine; that stretch reads GES. The active-site Nucleophile is Cys79. L-glutamine-binding positions include Arg105 and 134–135; that span reads IR. Active-site charge relay system residues include His170 and Glu172.

Belongs to the glutaminase PdxT/SNO family. In terms of assembly, in the presence of PdxS, forms a dodecamer of heterodimers. Only shows activity in the heterodimer.

It catalyses the reaction aldehydo-D-ribose 5-phosphate + D-glyceraldehyde 3-phosphate + L-glutamine = pyridoxal 5'-phosphate + L-glutamate + phosphate + 3 H2O + H(+). It carries out the reaction L-glutamine + H2O = L-glutamate + NH4(+). The protein operates within cofactor biosynthesis; pyridoxal 5'-phosphate biosynthesis. In terms of biological role, catalyzes the hydrolysis of glutamine to glutamate and ammonia as part of the biosynthesis of pyridoxal 5'-phosphate. The resulting ammonia molecule is channeled to the active site of PdxS. This chain is Pyridoxal 5'-phosphate synthase subunit PdxT, found in Listeria monocytogenes serotype 4b (strain CLIP80459).